The chain runs to 291 residues: ATP synthase gamma chain (291 aa).

Belongs to the ATPase gamma chain family. In terms of assembly, F-type ATPases have 2 components, CF(1) - the catalytic core - and CF(0) - the membrane proton channel. CF(1) has five subunits: alpha(3), beta(3), gamma(1), delta(1), epsilon(1). CF(0) has three main subunits: a, b and c.

Its subcellular location is the cell inner membrane. Its function is as follows. Produces ATP from ADP in the presence of a proton gradient across the membrane. The gamma chain is believed to be important in regulating ATPase activity and the flow of protons through the CF(0) complex. The protein is ATP synthase gamma chain of Burkholderia thailandensis (strain ATCC 700388 / DSM 13276 / CCUG 48851 / CIP 106301 / E264).